Here is a 381-residue protein sequence, read N- to C-terminus: Glycerate kinase (381 aa).

Belongs to the glycerate kinase type-1 family.

The catalysed reaction is (R)-glycerate + ATP = (2R)-3-phosphoglycerate + ADP + H(+). In Bacillus cereus (strain ATCC 10987 / NRS 248), this protein is Glycerate kinase (glxK).